The chain runs to 326 residues: Zinc-dependent endopolyphosphatase (326 aa).

The Cytoplasmic segment spans residues 1–9 (MEDKRKRRA). Residues 10–30 (ATLSTALILFVACCVYTLYIF) traverse the membrane as a helical segment. The Vacuolar portion of the chain corresponds to 31–326 (KFDNPRLSPP…DYELIQVQCS (296 aa)). 2 N-linked (GlcNAc...) asparagine glycosylation sites follow: N90 and N241.

It belongs to the metallophosphoesterase superfamily. In terms of assembly, interacts with PPN1. Zn(2+) serves as cofactor. Co(2+) is required as a cofactor. Requires Mg(2+) as cofactor.

The protein resides in the vacuole membrane. The enzyme catalyses [phosphate](n+1) + n H2O = (n+1) phosphate + n H(+). With respect to regulation, not sensitive to heparin inhibition. Catalyzes the hydrolysis of inorganic polyphosphate (polyP) chains of many hundreds of phosphate residues into shorter lengths. Exclusively shows endopolyphosphatase activity, cleaving inside the polyP chain. Together with PPN1, responsible for a substantial fraction of polyphosphatase activity that is necessary to mobilize polyP stores in response to phosphate scarcity. The sequence is that of Zinc-dependent endopolyphosphatase from Saccharomyces cerevisiae (strain ATCC 204508 / S288c) (Baker's yeast).